We begin with the raw amino-acid sequence, 110 residues long: Carboxysome shell protein CsoS1B (110 aa).

Residues 8-93 (ALGMIETRGL…VHSEVEIILP (86 aa)) enclose the BMC domain.

It belongs to the bacterial microcompartments protein family. CsoS1 subfamily. In terms of assembly, homohexamer with a small central pore. Interacts with the N-terminus (residues 1-136) of RuBisCO (CbbL).

It localises to the carboxysome. One of shell proteins of the carboxysome, a polyhedral inclusion where RuBisCO (ribulose bisphosphate carboxylase, ccbL-ccbS) is sequestered. Assembles into hexamers which make sheets that form the facets of the polyhedral carboxysome. The shell probably limits the diffusion of CO(2) into and out of the carboxysome. There are estimated to be 540 CsoS1B proteins per carboxysome. In terms of biological role, unlike beta-carboxysomes, alpha-carboxysomes (Cb) can form without cargo protein. CsoS2 is essential for Cb formation and is also capable of targeting foreign proteins to the Cb. The Cb shell assembles with the aid of CsoS2; CsoS1A, CsoS1B and CsoS1C form the majority of the shell while CsoS4A and CsoS4B form vertices. CsoS1D forms pseudohexamers that probably control metabolite flux into and out of the shell. In Halothiobacillus neapolitanus (strain ATCC 23641 / c2) (Thiobacillus neapolitanus), this protein is Carboxysome shell protein CsoS1B.